The following is a 539-amino-acid chain: Chloride channel CLIC-like protein 1 (539 aa).

A signal peptide spans 1–18; it reads MLCRLLLCECLLLITGYA. The Lumenal portion of the chain corresponds to 19–184; that stretch reads HDDDWIDPTD…EDYFGVDPYN (166 aa). Residues 41 to 61 form a disordered region; that stretch reads KSQVRSGTSEKKEVSPDSSEA. Residues 185–205 traverse the membrane as a helical segment; the sequence is VFMVLLCLLCLVVLVATELWT. The Cytoplasmic segment spans residues 206–215; the sequence is YVRWYTQMKR. A helical membrane pass occupies residues 216–236; it reads IFIISFLLSLAWNWIYLYKMA. At 237–329 the chain is on the lumenal side; the sequence is FAQHQANIAG…GEFIKALMKE (93 aa). Residues 330–350 traverse the membrane as a helical segment; the sequence is IPVLLQIPVLAILALAVLSFC. Residues 351–539 lie on the Cytoplasmic side of the membrane; it reads YGAGRSVPML…GTEPVSSPCG (189 aa). The segment at 361-410 is disordered; that stretch reads RHFGGPDREPPRALEPDDRRRQKGLDYRLHGGAGDADFSYRGPAGSIEQG. Residues 364 to 389 are compositionally biased toward basic and acidic residues; that stretch reads GGPDREPPRALEPDDRRRQKGLDYRL. Residues Ser429, Ser433, and Ser459 each carry the phosphoserine modification. Residues 444–539 are disordered; sequence DTEAQEHPEV…GTEPVSSPCG (96 aa). Polar residues predominate over residues 475-485; the sequence is STPTEYSQSAK. Thr476 carries the post-translational modification Phosphothreonine. Phosphoserine is present on residues Ser498, Ser513, and Ser521. The segment covering 512–521 has biased composition (low complexity); the sequence is CSPPGGCPPS.

It belongs to the chloride channel MCLC family. In terms of assembly, homomultimers. Interacts with mitochondrial protein PIGBOS1 (via C-terminus); the interaction occurs at the mitochondria-associated endoplasmic reticulum (ER) membrane, a zone of contact between the ER and mitochondrial membranes, but does not appear to play a role in ER-mitochondria tethering and is not affected by ER stress. Interacts with CALR. As to expression, expressed in cerebellum (at protein level).

It localises to the endoplasmic reticulum membrane. The catalysed reaction is chloride(in) = chloride(out). It carries out the reaction bromide(in) = bromide(out). The enzyme catalyses nitrate(in) = nitrate(out). It catalyses the reaction fluoride(in) = fluoride(out). Activated by membrane phosphatidylinositol 4,5-bisphosphate (PI(4,5)P2, PIP2). Inhibited by lumenal Ca(2+). Its function is as follows. Anion-selective channel with Ca(2+)-dependent and voltage-independent gating. Permeable to small monovalent anions with selectivity for bromide &gt; chloride &gt; nitrate &gt; fluoride. Operates in the endoplasmic reticulum (ER) membrane where it mediates chloride efflux to compensate for the loss of positive charges from the ER lumen upon Ca(2+) release. Contributes to the maintenance of ER Ca(2+) pools and activation of unfolded protein response to prevent accumulation of misfolded proteins in the ER lumen. Particularly involved in ER homeostasis mechanisms underlying motor neurons and retinal photoreceptors survival. This chain is Chloride channel CLIC-like protein 1, found in Mus musculus (Mouse).